A 37-amino-acid chain; its full sequence is Large ribosomal subunit protein bL36c (37 aa).

The protein belongs to the bacterial ribosomal protein bL36 family.

Its subcellular location is the plastid. It localises to the chloroplast. This Phalaenopsis aphrodite subsp. formosana (Moth orchid) protein is Large ribosomal subunit protein bL36c.